Here is a 213-residue protein sequence, read N- to C-terminus: MOB kinase activator-like 1 homolog A (213 aa).

Residues cysteine 77, cysteine 82, histidine 159, and histidine 164 each coordinate Zn(2+).

This sequence belongs to the MOB1/phocein family.

The protein is MOB kinase activator-like 1 homolog A (mobA) of Dictyostelium discoideum (Social amoeba).